The following is a 237-amino-acid chain: Cyclic nucleotide phosphodiesterase inhibitor (237 aa).

An N-terminal signal peptide occupies residues methionine 1–glycine 20. Asparagine 28, asparagine 65, and asparagine 70 each carry an N-linked (GlcNAc...) asparagine glycan. Cys-rich CT repeat units follow at residues aspartate 57–asparagine 81, asparagine 82–glycine 105, aspartate 116–glycine 139, aspartate 140–asparagine 162, and aspartate 163–lysine 186. Asparagine 153 is a glycosylation site (N-linked (GlcNAc...) asparagine). An N-linked (GlcNAc...) asparagine glycan is attached at asparagine 207.

In terms of biological role, PDI acts by binding stoichiometrically to cyclic nucleotide phosphodiesterase, changing the KM of the enzyme for cAMP from 10 uM to 2 mM. The protein is Cyclic nucleotide phosphodiesterase inhibitor (pdiA) of Dictyostelium discoideum (Social amoeba).